Here is a 93-residue protein sequence, read N- to C-terminus: DNA-directed RNA polymerase subunit omega (93 aa).

Belongs to the RNA polymerase subunit omega family. As to quaternary structure, the RNAP catalytic core consists of 2 alpha, 1 beta, 1 beta' and 1 omega subunit. When a sigma factor is associated with the core the holoenzyme is formed, which can initiate transcription.

It carries out the reaction RNA(n) + a ribonucleoside 5'-triphosphate = RNA(n+1) + diphosphate. Promotes RNA polymerase assembly. Latches the N- and C-terminal regions of the beta' subunit thereby facilitating its interaction with the beta and alpha subunits. The chain is DNA-directed RNA polymerase subunit omega from Glaesserella parasuis serovar 5 (strain SH0165) (Haemophilus parasuis).